A 431-amino-acid chain; its full sequence is Adenylosuccinate synthetase (431 aa).

GTP contacts are provided by residues 13 to 19 (GDEGKGK) and 41 to 43 (GHT). The Proton acceptor role is filled by Asp14. Asp14 and Gly41 together coordinate Mg(2+). IMP is bound by residues 14-17 (DEGK), 39-42 (NAGH), Thr130, Arg144, Gln225, Thr240, and Arg306. The Proton donor role is filled by His42. Residue 302–308 (ATTGRQR) participates in substrate binding. GTP is bound by residues Arg308, 334 to 336 (KLD), and 416 to 418 (STG).

The protein belongs to the adenylosuccinate synthetase family. Homodimer. Mg(2+) serves as cofactor.

It is found in the cytoplasm. It carries out the reaction IMP + L-aspartate + GTP = N(6)-(1,2-dicarboxyethyl)-AMP + GDP + phosphate + 2 H(+). The protein operates within purine metabolism; AMP biosynthesis via de novo pathway; AMP from IMP: step 1/2. In terms of biological role, plays an important role in the de novo pathway of purine nucleotide biosynthesis. Catalyzes the first committed step in the biosynthesis of AMP from IMP. The chain is Adenylosuccinate synthetase from Halorhodospira halophila (strain DSM 244 / SL1) (Ectothiorhodospira halophila (strain DSM 244 / SL1)).